The chain runs to 251 residues: CDP-diacylglycerol pyrophosphatase (251 aa).

A helical membrane pass occupies residues A4–W24.

The protein belongs to the Cdh family.

It localises to the cell inner membrane. The catalysed reaction is a CDP-1,2-diacyl-sn-glycerol + H2O = a 1,2-diacyl-sn-glycero-3-phosphate + CMP + 2 H(+). It functions in the pathway phospholipid metabolism; CDP-diacylglycerol degradation; phosphatidate from CDP-diacylglycerol: step 1/1. The chain is CDP-diacylglycerol pyrophosphatase from Escherichia coli O45:K1 (strain S88 / ExPEC).